A 178-amino-acid chain; its full sequence is Large ribosomal subunit protein uL10 (178 aa).

This sequence belongs to the universal ribosomal protein uL10 family. As to quaternary structure, part of the ribosomal stalk of the 50S ribosomal subunit. The N-terminus interacts with L11 and the large rRNA to form the base of the stalk. The C-terminus forms an elongated spine to which L12 dimers bind in a sequential fashion forming a multimeric L10(L12)X complex.

Its function is as follows. Forms part of the ribosomal stalk, playing a central role in the interaction of the ribosome with GTP-bound translation factors. This Stenotrophomonas maltophilia (strain R551-3) protein is Large ribosomal subunit protein uL10.